We begin with the raw amino-acid sequence, 184 residues long: Oligoribonuclease (184 aa).

One can recognise an Exonuclease domain in the interval 8–171 (LIWIDLEMTG…DDIRESIAEL (164 aa)). Tyr-129 is an active-site residue.

The protein belongs to the oligoribonuclease family.

The protein localises to the cytoplasm. Its function is as follows. 3'-to-5' exoribonuclease specific for small oligoribonucleotides. The polypeptide is Oligoribonuclease (Pasteurella multocida (strain Pm70)).